Here is a 393-residue protein sequence, read N- to C-terminus: Cysteine protease ATG4B (393 aa).

An N-acetylmethionine modification is found at Met1. The residue at position 34 (Ser34) is a Phosphoserine; by PKB/AKT1 and PKB/AKT2. The Nucleophile role is filled by Cys74. The residue at position 189 (Cys189) is an S-nitrosocysteine. Catalysis depends on residues Asp278 and His280. Cys292 and Cys301 each carry S-nitrosocysteine. A disulfide bridge links Cys292 with Cys361. Ser316 bears the Phosphoserine; by ULK1 mark. Ser383 is modified (phosphoserine; by STK26). The short motif at 388-391 (FEIL) is the LIR element. Phosphoserine is present on Ser392.

This sequence belongs to the peptidase C54 family. As to quaternary structure, interacts with PFKP; promoting phosphorylation of ATG4B at Ser-34. Interacts with GBP7. In terms of processing, phosphorylation at Ser-383 and Ser-392 promotes autophagy by increasing protein delipidation activity without affecting proteolytic activation of ATG8 proteins. Phosphorylation at Ser-316 by ULK1 inhibits autophagy by decreasing both proteolytic activation and delipidation activities. Phosphorylation at Ser-316 is dephosphorylated by protein phosphatase 2A (PP2A). Phosphorylation at Ser-34 by AKT2 promotes its hydrolase activity, leading to increased proteolytic activation and delipidation of ATG8 family proteins. Phosphorylation at Ser-34 by AKT1 promotes mitochondrial localization and inhibition of the F1F0-ATP synthase activity, leading to elevation of mitochondrial reactive oxygen species (ROS). Post-translationally, ubiquitinated by RNF5, leading to its degradation by the proteasome. S-nitrosylation at Cys-189 and Cys-292 in response to high glucose decreases both proteolytic activation and delipidation activities. In terms of processing, O-glycosylated by OGT, leading to increase protease activity, thereby promoting the proteolytic activation of ATG8 family proteins. Post-translationally, forms reversible intrachain disulfide bonds in response to oxidative stress. Forms interchain disulfide bonds, leading to formation of homooligomers in response to oxidation.

It localises to the cytoplasm. Its subcellular location is the cytosol. The protein localises to the cytoplasmic vesicle. The protein resides in the autophagosome. It is found in the endoplasmic reticulum. It localises to the mitochondrion. The enzyme catalyses [protein]-C-terminal L-amino acid-glycyl-phosphatidylethanolamide + H2O = [protein]-C-terminal L-amino acid-glycine + a 1,2-diacyl-sn-glycero-3-phosphoethanolamine. It carries out the reaction [protein]-C-terminal L-amino acid-glycyl-phosphatidylserine + H2O = [protein]-C-terminal L-amino acid-glycine + a 1,2-diacyl-sn-glycero-3-phospho-L-serine. With respect to regulation, inhibited by N-ethylmaleimide. Redox-regulated during autophagy since reducing conditions activate ATG4A whereas an oxidizing environment such as the presence of H(2)O(2) inhibits its activity. The cysteine protease activity compounds is inhibited by styrylquinoline compounds 4-28 and LV-320. In terms of biological role, cysteine protease that plays a key role in autophagy by mediating both proteolytic activation and delipidation of ATG8 family proteins. Required for canonical autophagy (macroautophagy), non-canonical autophagy as well as for mitophagy. The protease activity is required for proteolytic activation of ATG8 family proteins: cleaves the C-terminal amino acid of ATG8 proteins MAP1LC3A, MAP1LC3B, MAP1LC3C, GABARAPL1, GABARAPL2 and GABARAP, to reveal a C-terminal glycine. Exposure of the glycine at the C-terminus is essential for ATG8 proteins conjugation to phosphatidylethanolamine (PE) and insertion to membranes, which is necessary for autophagy. Protease activity is also required to counteract formation of high-molecular weight conjugates of ATG8 proteins (ATG8ylation): acts as a deubiquitinating-like enzyme that removes ATG8 conjugated to other proteins, such as ATG3. In addition to the protease activity, also mediates delipidation of ATG8 family proteins. Catalyzes delipidation of PE-conjugated forms of ATG8 proteins during macroautophagy. Also involved in non-canonical autophagy, a parallel pathway involving conjugation of ATG8 proteins to single membranes at endolysosomal compartments, by catalyzing delipidation of ATG8 proteins conjugated to phosphatidylserine (PS). Compared to other members of the family (ATG4A, ATG4C or ATG4C), constitutes the major protein for proteolytic activation of ATG8 proteins, while it displays weaker delipidation activity than other ATG4 paralogs. Involved in phagophore growth during mitophagy independently of its protease activity and of ATG8 proteins: acts by regulating ATG9A trafficking to mitochondria and promoting phagophore-endoplasmic reticulum contacts during the lipid transfer phase of mitophagy. The polypeptide is Cysteine protease ATG4B (Homo sapiens (Human)).